The following is a 205-amino-acid chain: 2-dehydro-3-deoxy-6-phosphogalactonate aldolase (205 aa).

Arg-14 serves as a coordination point for 2-dehydro-3-deoxy-6-phospho-D-galactonate. Glu-37 acts as the Proton donor/acceptor in catalysis. 5 residues coordinate 2-dehydro-3-deoxy-6-phospho-D-galactonate: Thr-66, Lys-126, Gly-156, Gly-176, and Ser-177. Catalysis depends on Lys-126, which acts as the Schiff-base intermediate with substrate.

This sequence belongs to the KHG/KDPG aldolase family. As to quaternary structure, homotrimer.

It carries out the reaction 2-dehydro-3-deoxy-6-phospho-D-galactonate = D-glyceraldehyde 3-phosphate + pyruvate. It functions in the pathway carbohydrate acid metabolism; D-galactonate degradation; D-glyceraldehyde 3-phosphate and pyruvate from D-galactonate: step 3/3. Functionally, involved in the degradation of galactose via the DeLey-Doudoroff pathway. Catalyzes the reversible, stereospecific retro-aldol cleavage of 2-keto-3-deoxy-6-phosphogalactonate (KDPGal) to pyruvate and D-glyceraldehyde-3-phosphate. In the synthetic direction, it catalyzes the addition of pyruvate to electrophilic aldehydes with re-facial selectivity. It can use a limited number of aldehyde substrates, including D-glyceraldehyde-3-phosphate (natural substrate), D-glyceraldehyde, glycolaldehyde, 2-pyridinecarboxaldehyde, D-ribose, D-erythrose and D-threose. It efficiently catalyzes aldol addition only using pyruvate as the nucleophilic component and accepts both stereochemical configurations at C2 of the electrophile. The protein is 2-dehydro-3-deoxy-6-phosphogalactonate aldolase (dgoA) of Escherichia coli (strain K12).